We begin with the raw amino-acid sequence, 267 residues long: NAD kinase 1 (267 aa).

Residue Asp-45 is the Proton acceptor of the active site. NAD(+) contacts are provided by residues Asp-45 to Gly-46, Asn-122 to Glu-123, Arg-149, Asp-151, and Ala-186.

This sequence belongs to the NAD kinase family. A divalent metal cation is required as a cofactor.

Its subcellular location is the cytoplasm. The enzyme catalyses NAD(+) + ATP = ADP + NADP(+) + H(+). Functionally, involved in the regulation of the intracellular balance of NAD and NADP, and is a key enzyme in the biosynthesis of NADP. Catalyzes specifically the phosphorylation on 2'-hydroxyl of the adenosine moiety of NAD to yield NADP. The protein is NAD kinase 1 of Oceanobacillus iheyensis (strain DSM 14371 / CIP 107618 / JCM 11309 / KCTC 3954 / HTE831).